We begin with the raw amino-acid sequence, 333 residues long: Casein kinase II subunit alpha-3 (333 aa).

The region spanning 34–319 (YEVVRKVGRG…AREAMDHPYF (286 aa)) is the Protein kinase domain. ATP is bound by residues 40-48 (VGRGKYSEV) and Lys63. Catalysis depends on Asp151, which acts as the Proton acceptor.

Belongs to the protein kinase superfamily. Ser/Thr protein kinase family. CK2 subfamily. In terms of assembly, heterotetramer of two catalytic alpha subunits and two regulatory beta subunits.

It is found in the nucleus. The protein resides in the nucleolus. It localises to the cytoplasm. It catalyses the reaction L-seryl-[protein] + ATP = O-phospho-L-seryl-[protein] + ADP + H(+). The enzyme catalyses L-threonyl-[protein] + ATP = O-phospho-L-threonyl-[protein] + ADP + H(+). Functionally, casein kinases are operationally defined by their preferential utilization of acidic proteins such as caseins as substrates. The alpha chain contains the catalytic site. The tetrameric holoenzyme CK2 is composed of two alpha and two beta subunits. Acts as a circadian clock component that maintains the correct period length through phosphorylation of CCA1. This Arabidopsis thaliana (Mouse-ear cress) protein is Casein kinase II subunit alpha-3.